The primary structure comprises 191 residues: Putative resolvase L103 (191 aa).

Residues 11-30 (LEVLKVHYQTLYRMEEKGLI) constitute a DNA-binding region (H-T-H motif). The 133-residue stretch at 59-191 (KGICYCRVSS…KKSGKLKAKK (133 aa)) folds into the Resolvase/invertase-type recombinase catalytic domain. The stretch at 65–91 (RVSSKKQIKDLNRQVEYMEKNYPEYEI) forms a coiled coil. Catalysis depends on S67, which acts as the O-(5'-phospho-DNA)-serine intermediate.

It belongs to the site-specific recombinase resolvase family.

Its function is as follows. Resolvase catalyzes the resolution (a site-specific recombination) of the cointegrated replicon to yield the final transposition products. This chain is Putative resolvase L103, found in Acanthamoeba polyphaga (Amoeba).